The sequence spans 362 residues: Peptide chain release factor 1 (362 aa).

Gln237 bears the N5-methylglutamine mark. Residues 279–305 (RLQQAEDEKRRSEEESSRRNLVASGDR) are disordered. The span at 282 to 296 (QAEDEKRRSEEESSR) shows a compositional bias: basic and acidic residues.

This sequence belongs to the prokaryotic/mitochondrial release factor family. Methylated by PrmC. Methylation increases the termination efficiency of RF1.

Its subcellular location is the cytoplasm. Functionally, peptide chain release factor 1 directs the termination of translation in response to the peptide chain termination codons UAG and UAA. The sequence is that of Peptide chain release factor 1 from Colwellia psychrerythraea (strain 34H / ATCC BAA-681) (Vibrio psychroerythus).